Reading from the N-terminus, the 467-residue chain is Zinc finger protein ZIC 3 (467 aa).

The disordered stretch occupies residues 66–107 (LSSGQSSAFTPQGSGYANALGHHHHHHHHHHHTSQVPSYGGA). Residues 67–80 (SSGQSSAFTPQGSG) are compositionally biased toward polar residues. Basic residues predominate over residues 86-98 (GHHHHHHHHHHHT). Residue Lys248 forms a Glycyl lysine isopeptide (Lys-Gly) (interchain with G-Cter in SUMO2) linkage. The segment at 251 to 286 (LSCKWIDEAQLSRPKKSCDRTFSTMHELVTHVTMEH) adopts a C2H2-type 1; atypical zinc-finger fold. A C2H2-type 2; atypical zinc finger spans residues 295 to 322 (HVCYWEECPREGKSFKAKYKLVNHIRVH). 2 consecutive short sequence motifs (nuclear localization signal) follow at residues 297-322 (CYWE…IRVH) and 330-352 (CPFP…KRTH). 3 consecutive C2H2-type zinc fingers follow at residues 328 to 352 (FPCP…KRTH), 358 to 382 (FKCE…MHVH), and 388 to 410 (YICK…MKVH). Positions 404 to 467 (RKHMKVHESQ…LPPNFNEWYV (64 aa)) are disordered. Residues 412–428 (SQGSDSSPAASSGYESS) show a composition bias toward low complexity. The segment covering 435–455 (SANSKDTTKTPSAVQTSTSHN) has biased composition (polar residues).

This sequence belongs to the GLI C2H2-type zinc-finger protein family. Interacts (via the C2H2-type domains 3, 4 and 5) with MDFIC (via the C2H2-type domains 3, 4 and 5); the interaction reduces its transcriptional activity. Interacts with KPNA1 and KPNA6. Interacts (via C2H2-type domains 3, 4 and 5) with GLI3; the interaction enhances its transcriptional activity.

Its subcellular location is the nucleus. The protein localises to the cytoplasm. Acts as a transcriptional activator. Required in the earliest stages in both axial midline development and left-right (LR) asymmetry specification. Binds to the minimal GLI-consensus sequence 5'-GGGTGGTC-3'. The polypeptide is Zinc finger protein ZIC 3 (ZIC3) (Homo sapiens (Human)).